The chain runs to 184 residues: Large ribosomal subunit protein eL13 (184 aa).

A disordered region spans residues 28 to 53 (PARKERRRQARKAKAQRIAPRPASGP). Over residues 31-42 (KERRRQARKAKA) the composition is skewed to basic residues.

It belongs to the eukaryotic ribosomal protein eL13 family.

The chain is Large ribosomal subunit protein eL13 (RPL13) from Schistosoma mansoni (Blood fluke).